Consider the following 404-residue polypeptide: Arginine biosynthesis bifunctional protein ArgJ (404 aa).

Positions 156, 182, 193, 277, 399, and 404 each coordinate substrate. Thr-193 functions as the Nucleophile in the catalytic mechanism.

Belongs to the ArgJ family. As to quaternary structure, heterotetramer of two alpha and two beta chains.

Its subcellular location is the cytoplasm. It carries out the reaction N(2)-acetyl-L-ornithine + L-glutamate = N-acetyl-L-glutamate + L-ornithine. The enzyme catalyses L-glutamate + acetyl-CoA = N-acetyl-L-glutamate + CoA + H(+). Its pathway is amino-acid biosynthesis; L-arginine biosynthesis; L-ornithine and N-acetyl-L-glutamate from L-glutamate and N(2)-acetyl-L-ornithine (cyclic): step 1/1. It participates in amino-acid biosynthesis; L-arginine biosynthesis; N(2)-acetyl-L-ornithine from L-glutamate: step 1/4. Functionally, catalyzes two activities which are involved in the cyclic version of arginine biosynthesis: the synthesis of N-acetylglutamate from glutamate and acetyl-CoA as the acetyl donor, and of ornithine by transacetylation between N(2)-acetylornithine and glutamate. The sequence is that of Arginine biosynthesis bifunctional protein ArgJ from Chlorobaculum tepidum (strain ATCC 49652 / DSM 12025 / NBRC 103806 / TLS) (Chlorobium tepidum).